We begin with the raw amino-acid sequence, 189 residues long: Adenylate kinase (189 aa).

11–16 (GSGKGT) is an ATP binding site. Positions 31–60 (STGDVLRAEIKKGTELGKTAKGYIDQGQLL) are NMP. Residues Thr-32, Arg-37, 58-60 (QLL), 86-89 (GFPR), and Gln-93 each bind AMP. An LID region spans residues 127–137 (KRGQESGRADD). Arg-128 contacts ATP. The AMP site is built by Arg-134 and Arg-145. An ATP-binding site is contributed by Gly-173.

Belongs to the adenylate kinase family. As to quaternary structure, monomer.

The protein resides in the cytoplasm. It catalyses the reaction AMP + ATP = 2 ADP. Its pathway is purine metabolism; AMP biosynthesis via salvage pathway; AMP from ADP: step 1/1. Functionally, catalyzes the reversible transfer of the terminal phosphate group between ATP and AMP. Plays an important role in cellular energy homeostasis and in adenine nucleotide metabolism. The protein is Adenylate kinase of Phocaeicola vulgatus (strain ATCC 8482 / DSM 1447 / JCM 5826 / CCUG 4940 / NBRC 14291 / NCTC 11154) (Bacteroides vulgatus).